The chain runs to 34 residues: Sperm protein EM1 (34 aa).

The span at Ala-1 to Ser-17 shows a compositional bias: basic residues. The segment at Ala-1–Arg-34 is disordered. 7 repeat units span residues Ser-3–Lys-4, Ser-5–Arg-6, Ser-7–Arg-8, Ser-9–Arg-10, Ser-11–Arg-12, Ser-13–Arg-14, and Ser-15–Lys-16. The 7 X 2 AA tandem repeats of S-[KR] stretch occupies residues Ser-3 to Lys-16. The span at Pro-18–Arg-34 shows a compositional bias: low complexity.

In terms of tissue distribution, sperm.

Its subcellular location is the nucleus. This chain is Sperm protein EM1, found in Ensis minor (Razor shell).